Here is a 211-residue protein sequence, read N- to C-terminus: Thiamine-phosphate synthase (211 aa).

4-amino-2-methyl-5-(diphosphooxymethyl)pyrimidine is bound by residues 37–41 (QLRIK) and asparagine 69. Positions 70 and 89 each coordinate Mg(2+). Serine 108 contributes to the 4-amino-2-methyl-5-(diphosphooxymethyl)pyrimidine binding site. 2-[(2R,5Z)-2-carboxy-4-methylthiazol-5(2H)-ylidene]ethyl phosphate is bound at residue 134–136 (TQT). 4-amino-2-methyl-5-(diphosphooxymethyl)pyrimidine is bound at residue lysine 137. 2-[(2R,5Z)-2-carboxy-4-methylthiazol-5(2H)-ylidene]ethyl phosphate contacts are provided by residues glycine 166 and 186 to 187 (VS).

This sequence belongs to the thiamine-phosphate synthase family. Mg(2+) is required as a cofactor.

It catalyses the reaction 2-[(2R,5Z)-2-carboxy-4-methylthiazol-5(2H)-ylidene]ethyl phosphate + 4-amino-2-methyl-5-(diphosphooxymethyl)pyrimidine + 2 H(+) = thiamine phosphate + CO2 + diphosphate. It carries out the reaction 2-(2-carboxy-4-methylthiazol-5-yl)ethyl phosphate + 4-amino-2-methyl-5-(diphosphooxymethyl)pyrimidine + 2 H(+) = thiamine phosphate + CO2 + diphosphate. The enzyme catalyses 4-methyl-5-(2-phosphooxyethyl)-thiazole + 4-amino-2-methyl-5-(diphosphooxymethyl)pyrimidine + H(+) = thiamine phosphate + diphosphate. The protein operates within cofactor biosynthesis; thiamine diphosphate biosynthesis; thiamine phosphate from 4-amino-2-methyl-5-diphosphomethylpyrimidine and 4-methyl-5-(2-phosphoethyl)-thiazole: step 1/1. Its function is as follows. Condenses 4-methyl-5-(beta-hydroxyethyl)thiazole monophosphate (THZ-P) and 2-methyl-4-amino-5-hydroxymethyl pyrimidine pyrophosphate (HMP-PP) to form thiamine monophosphate (TMP). The sequence is that of Thiamine-phosphate synthase from Enterobacter sp. (strain 638).